We begin with the raw amino-acid sequence, 443 residues long: Glucose-6-phosphate isomerase (443 aa).

Residue glutamate 285 is the Proton donor of the active site. Catalysis depends on residues histidine 306 and lysine 420.

It belongs to the GPI family.

It localises to the cytoplasm. It carries out the reaction alpha-D-glucose 6-phosphate = beta-D-fructose 6-phosphate. It participates in carbohydrate biosynthesis; gluconeogenesis. Its pathway is carbohydrate degradation; glycolysis; D-glyceraldehyde 3-phosphate and glycerone phosphate from D-glucose: step 2/4. In terms of biological role, catalyzes the reversible isomerization of glucose-6-phosphate to fructose-6-phosphate. This Staphylococcus epidermidis (strain ATCC 12228 / FDA PCI 1200) protein is Glucose-6-phosphate isomerase.